Consider the following 207-residue polypeptide: Large ribosomal subunit protein bL25 (207 aa).

It belongs to the bacterial ribosomal protein bL25 family. CTC subfamily. In terms of assembly, part of the 50S ribosomal subunit; part of the 5S rRNA/L5/L18/L25 subcomplex. Contacts the 5S rRNA. Binds to the 5S rRNA independently of L5 and L18.

Functionally, this is one of the proteins that binds to the 5S RNA in the ribosome where it forms part of the central protuberance. The polypeptide is Large ribosomal subunit protein bL25 (Paraburkholderia xenovorans (strain LB400)).